The sequence spans 785 residues: MLCGGWKRSRRSPEESRVSAQVAAPLAFPPSPASSDSSTKRPGLRALKKMGLTEDEDVQAMLRGSRLLKIRSRTWHKERLYRLQEDGLSVWFQRRIPRAASKHIFFVQHIEAVREGHQSEGLRRFGGAFAPACCLTIAFKGRRKNLDLAAPTAEEAQRWVRGLAKLRARLDAMSQRERLDHWIHSYLHRADSDQDSKMSFKEIKSLLRMVNVDMNDMYAYRLFKECDHSNNERLEGAEIEAFLRRLLKRPELEEIFRRYSGEDRVLSASELLEFLEDQGEDGATLACAQQLIQTYELNETAKQHELMTLDGFMMYLLSPEGAALNVAHTCVFQDMGQPLAHYFISSSHNTYLTDSQIGGTSSTEAYIRAFAQGCRCVELDCWEGPGGEPVIYHGHTLTSKILFRDVIQAVRDHAFTSSPYPVILSLENHCGLEQQAVMARHLRSILGDMLVTQALDSQNPEELPSPEQLKGRILVKGKKLPAARSEDGRILSDREEEEEEEEEAEEALEAAEQRSRAKQISPELSALAVYCCATRLRTLDPSPGPPQSCTVGSLSERKARKFTREAGTSFVRHNTQQLTRVYPLGLRMNSANYNPQEMWNSGCQLVALNFQTPGYEMDLNTGRFLINGQCGYVLKPAYLRQLNTTFDPECPGPPRTTLAIQVLTAQQLPKLNAEKPSSIVDPLVRVEIHGVPEDCAQKETDYVLNNGFNPCWEQTLQFRLRAPELVLVRFVVEDYDTTSPNDFVGQSTLPLSSLKQGYRHIHLLSKDGASLAPATLFVHIRIQNS.

The interval 1-43 is disordered; that stretch reads MLCGGWKRSRRSPEESRVSAQVAAPLAFPPSPASSDSSTKRPG. The PH domain occupies 65–168; that stretch reads SRLLKIRSRT…WVRGLAKLRA (104 aa). The substrate binding stretch occupies residues 69–97; the sequence is KIRSRTWHKERLYRLQEDGLSVWFQRRIP. A Phosphoserine modification is found at serine 101. EF-hand domains follow at residues 178-213, 214-249, and 246-281; these read RLDHWIHSYLHRADSDQDSKMSFKEIKSLLRMVNVD, MNDMYAYRLFKECDHSNNERLEGAEIEAFLRRLLKR, and LLKRPELEEIFRRYSGEDRVLSASELLEFLEDQGED. Ca(2+)-binding residues include aspartate 191, aspartate 193, aspartate 195, lysine 197, glutamate 202, aspartate 227, serine 229, asparagine 231, arginine 233, and glutamate 238. One can recognise a PI-PLC X-box domain in the interval 333-478; the sequence is QDMGQPLAHY…LKGRILVKGK (146 aa). Histidine 348 is a catalytic residue. Asparagine 349, glutamate 378, and aspartate 380 together coordinate Ca(2+). The active site involves histidine 393. Glutamate 427 contacts Ca(2+). Lysine 476 and lysine 478 together coordinate substrate. The segment covering 484–493 has biased composition (basic and acidic residues); the sequence is RSEDGRILSD. Residues 484–517 are disordered; the sequence is RSEDGRILSDREEEEEEEEEAEEALEAAEQRSRA. At serine 492 the chain carries Phosphoserine. Positions 494–509 are enriched in acidic residues; that stretch reads REEEEEEEEEAEEALE. Residues 524–640 enclose the PI-PLC Y-box domain; the sequence is LSALAVYCCA…GYVLKPAYLR (117 aa). Serine 553 is a substrate binding site. The residue at position 569 (serine 569) is a Phosphoserine. Arginine 580 is a substrate binding site. Positions 636 to 765 constitute a C2 domain; sequence PAYLRQLNTT…QGYRHIHLLS (130 aa). Residues isoleucine 679, aspartate 681, asparagine 705, aspartate 734, tyrosine 735, and aspartate 736 each coordinate Ca(2+).

The cofactor is Ca(2+). In terms of tissue distribution, expressed in cerebellum and cerebral cortex.

It is found in the membrane. Its subcellular location is the cytoplasm. The protein resides in the cleavage furrow. It carries out the reaction a 1,2-diacyl-sn-glycero-3-phospho-(1D-myo-inositol-4,5-bisphosphate) + H2O = 1D-myo-inositol 1,4,5-trisphosphate + a 1,2-diacyl-sn-glycerol + H(+). Its activity is regulated as follows. Strongly activated by phosphatidic acid. Inhibited by phosphatidylethanolamine (PtdEtn), phosphatidylcholine (PtdCho), sphingomyelin and phosphatidylserine (PtdSer). Functionally, hydrolyzes the phosphatidylinositol 4,5-bisphosphate (PIP2) to generate 2 second messenger molecules diacylglycerol (DAG) and inositol 1,4,5-trisphosphate (IP3). DAG mediates the activation of protein kinase C (PKC), while IP3 releases Ca(2+) from intracellular stores. Essential for trophoblast and placental development. May participate in cytokinesis by hydrolyzing PIP2 at the cleavage furrow. Regulates neurite outgrowth through the inhibition of RhoA/Rho kinase signaling. The protein is 1-phosphatidylinositol 4,5-bisphosphate phosphodiesterase delta-3 of Mus musculus (Mouse).